The following is a 163-amino-acid chain: Large ribosomal subunit protein uL10 (163 aa).

The protein belongs to the universal ribosomal protein uL10 family. As to quaternary structure, part of the ribosomal stalk of the 50S ribosomal subunit. The N-terminus interacts with L11 and the large rRNA to form the base of the stalk. The C-terminus forms an elongated spine to which L12 dimers bind in a sequential fashion forming a multimeric L10(L12)X complex.

Its function is as follows. Forms part of the ribosomal stalk, playing a central role in the interaction of the ribosome with GTP-bound translation factors. This Histophilus somni (strain 2336) (Haemophilus somnus) protein is Large ribosomal subunit protein uL10.